Here is a 95-residue protein sequence, read N- to C-terminus: Small ribosomal subunit protein bS6 (95 aa).

This sequence belongs to the bacterial ribosomal protein bS6 family. Part of the 30S ribosomal subunit.

Its function is as follows. Binds together with bS18 to 16S ribosomal RNA. The protein is Small ribosomal subunit protein bS6 (rpsF) of Bacillus subtilis (strain 168).